Reading from the N-terminus, the 20-residue chain is Manganese peroxidase H5 (20 aa).

The protein belongs to the peroxidase family. Ligninase subfamily.

It localises to the secreted. It catalyses the reaction 2 Mn(2+) + H2O2 + 2 H(+) = 2 Mn(3+) + 2 H2O. In terms of biological role, catalyzes the oxidation of Mn(2+) to Mn(3+). The latter, acting as a diffusible redox mediator, is capable of oxidizing a variety of lignin compounds. This is Manganese peroxidase H5 from Phanerodontia chrysosporium (White-rot fungus).